Reading from the N-terminus, the 425-residue chain is Tol-Pal system protein TolB (425 aa).

The first 22 residues, 1–22 (MRNFLYCTGVLLLLWMSTSSQA), serve as a signal peptide directing secretion.

This sequence belongs to the TolB family. The Tol-Pal system is composed of five core proteins: the inner membrane proteins TolA, TolQ and TolR, the periplasmic protein TolB and the outer membrane protein Pal. They form a network linking the inner and outer membranes and the peptidoglycan layer.

It is found in the periplasm. Functionally, part of the Tol-Pal system, which plays a role in outer membrane invagination during cell division and is important for maintaining outer membrane integrity. In Nitrosomonas europaea (strain ATCC 19718 / CIP 103999 / KCTC 2705 / NBRC 14298), this protein is Tol-Pal system protein TolB.